Here is a 390-residue protein sequence, read N- to C-terminus: S-adenosylmethionine synthase 3 (390 aa).

Glu-9 contributes to the Mg(2+) binding site. His-15 contacts ATP. Residue Glu-43 coordinates K(+). L-methionine-binding residues include Glu-56 and Gln-99. ATP-binding positions include 167–169, 235–238, Asp-246, 252–253, Ala-269, Lys-273, and Lys-277; these read DGK, SGRF, and RK. Residue Asp-246 coordinates L-methionine. Position 277 (Lys-277) interacts with L-methionine.

It belongs to the AdoMet synthase family. As to quaternary structure, homotetramer. It depends on Mn(2+) as a cofactor. Requires Mg(2+) as cofactor. The cofactor is Co(2+). K(+) is required as a cofactor. As to expression, mostly expressed in stems and leaves.

The protein resides in the cytoplasm. It catalyses the reaction L-methionine + ATP + H2O = S-adenosyl-L-methionine + phosphate + diphosphate. The protein operates within amino-acid biosynthesis; S-adenosyl-L-methionine biosynthesis; S-adenosyl-L-methionine from L-methionine: step 1/1. Functionally, catalyzes the formation of S-adenosylmethionine from methionine and ATP. The reaction comprises two steps that are both catalyzed by the same enzyme: formation of S-adenosylmethionine (AdoMet) and triphosphate, and subsequent hydrolysis of the triphosphate. The sequence is that of S-adenosylmethionine synthase 3 (SAM3) from Solanum lycopersicum (Tomato).